The primary structure comprises 275 residues: 4-hydroxy-3-methylbut-2-enyl diphosphate reductase (275 aa).

[4Fe-4S] cluster is bound at residue C12. Residues H36 and H70 each coordinate (2E)-4-hydroxy-3-methylbut-2-enyl diphosphate. Residues H36 and H70 each contribute to the dimethylallyl diphosphate site. Isopentenyl diphosphate-binding residues include H36 and H70. C92 contacts [4Fe-4S] cluster. (2E)-4-hydroxy-3-methylbut-2-enyl diphosphate is bound at residue H120. H120 provides a ligand contact to dimethylallyl diphosphate. H120 contributes to the isopentenyl diphosphate binding site. The active-site Proton donor is E122. T158 contributes to the (2E)-4-hydroxy-3-methylbut-2-enyl diphosphate binding site. Position 186 (C186) interacts with [4Fe-4S] cluster. (2E)-4-hydroxy-3-methylbut-2-enyl diphosphate contacts are provided by S214, S215, N216, and S258. Dimethylallyl diphosphate-binding residues include S214, S215, N216, and S258. Isopentenyl diphosphate contacts are provided by S214, S215, N216, and S258.

This sequence belongs to the IspH family. [4Fe-4S] cluster serves as cofactor.

It carries out the reaction isopentenyl diphosphate + 2 oxidized [2Fe-2S]-[ferredoxin] + H2O = (2E)-4-hydroxy-3-methylbut-2-enyl diphosphate + 2 reduced [2Fe-2S]-[ferredoxin] + 2 H(+). The catalysed reaction is dimethylallyl diphosphate + 2 oxidized [2Fe-2S]-[ferredoxin] + H2O = (2E)-4-hydroxy-3-methylbut-2-enyl diphosphate + 2 reduced [2Fe-2S]-[ferredoxin] + 2 H(+). It participates in isoprenoid biosynthesis; dimethylallyl diphosphate biosynthesis; dimethylallyl diphosphate from (2E)-4-hydroxy-3-methylbutenyl diphosphate: step 1/1. It functions in the pathway isoprenoid biosynthesis; isopentenyl diphosphate biosynthesis via DXP pathway; isopentenyl diphosphate from 1-deoxy-D-xylulose 5-phosphate: step 6/6. Catalyzes the conversion of 1-hydroxy-2-methyl-2-(E)-butenyl 4-diphosphate (HMBPP) into a mixture of isopentenyl diphosphate (IPP) and dimethylallyl diphosphate (DMAPP). Acts in the terminal step of the DOXP/MEP pathway for isoprenoid precursor biosynthesis. This chain is 4-hydroxy-3-methylbut-2-enyl diphosphate reductase, found in Campylobacter hominis (strain ATCC BAA-381 / DSM 21671 / CCUG 45161 / LMG 19568 / NCTC 13146 / CH001A).